Consider the following 397-residue polypeptide: Yellow-related salivary protein LJM111 (397 aa).

A signal peptide spans 1–18; sequence MKLFFFLYTFGLVQTIFG.

Belongs to the major royal jelly protein family. Salivary gland (at protein level).

The protein localises to the secreted. Probably modulates blood feeding of sand flies on vertebrate species by binding and sequestering different mediators involved in the host response. Binds biogenic amines. Binds adrenaline and noradrenaline with high affinity. Binds serotonin. Binds dopamine and octopamine. Exhibits anti-inflammatory effects in the host: reduces IL17A, TNF-alpha (TNF) and IFN-gamma (IFNG) production by host lymph node cells, suppresses expression of MHC-II and CD86, reduces TNF-alpha production and increases IL10 production, in host bone marrow-derived dendritic cells (BMDCs) stimulated by lipopolysaccharides. Reduces pain in mouse mechanical hypernociception model. The chain is Yellow-related salivary protein LJM111 from Lutzomyia longipalpis (Sand fly).